The primary structure comprises 813 residues: Leucine--tRNA ligase (813 aa).

Residues 42-52 carry the 'HIGH' region motif; the sequence is PYTSGNLHIGH. A 'KMSKS' region motif is present at residues 580-584; sequence KMSKS. Residue Lys583 participates in ATP binding.

It belongs to the class-I aminoacyl-tRNA synthetase family.

It is found in the cytoplasm. The enzyme catalyses tRNA(Leu) + L-leucine + ATP = L-leucyl-tRNA(Leu) + AMP + diphosphate. The polypeptide is Leucine--tRNA ligase (Dehalococcoides mccartyi (strain CBDB1)).